A 952-amino-acid polypeptide reads, in one-letter code: Valine--tRNA ligase (952 aa).

Positions 45–55 match the 'HIGH' region motif; sequence PNVTGSLHMGH. A 'KMSKS' region motif is present at residues 571 to 575; sequence KMSKS. Lys574 is a binding site for ATP. Positions 894 to 950 form a coiled coil; that stretch reads KEIAKADADIARVDLKLADQNFIANAPGEIVEDEKEKREAAAARKAKFVEALERLKA.

This sequence belongs to the class-I aminoacyl-tRNA synthetase family. ValS type 1 subfamily. Monomer.

It is found in the cytoplasm. It catalyses the reaction tRNA(Val) + L-valine + ATP = L-valyl-tRNA(Val) + AMP + diphosphate. Its function is as follows. Catalyzes the attachment of valine to tRNA(Val). As ValRS can inadvertently accommodate and process structurally similar amino acids such as threonine, to avoid such errors, it has a 'posttransfer' editing activity that hydrolyzes mischarged Thr-tRNA(Val) in a tRNA-dependent manner. The sequence is that of Valine--tRNA ligase from Nitrobacter winogradskyi (strain ATCC 25391 / DSM 10237 / CIP 104748 / NCIMB 11846 / Nb-255).